The sequence spans 354 residues: Alanine racemase (354 aa).

Residue K33 is the Proton acceptor; specific for D-alanine of the active site. Residue K33 is modified to N6-(pyridoxal phosphate)lysine. Residue R127 coordinates substrate. Catalysis depends on Y251, which acts as the Proton acceptor; specific for L-alanine. M299 contributes to the substrate binding site.

Belongs to the alanine racemase family. It depends on pyridoxal 5'-phosphate as a cofactor.

It catalyses the reaction L-alanine = D-alanine. Its pathway is amino-acid biosynthesis; D-alanine biosynthesis; D-alanine from L-alanine: step 1/1. Its function is as follows. Catalyzes the interconversion of L-alanine and D-alanine. May also act on other amino acids. This Fusobacterium nucleatum subsp. nucleatum (strain ATCC 25586 / DSM 15643 / BCRC 10681 / CIP 101130 / JCM 8532 / KCTC 2640 / LMG 13131 / VPI 4355) protein is Alanine racemase (alr).